Consider the following 427-residue polypeptide: Membrane-bound hydrogenase subunit alpha (427 aa).

4 residues coordinate Ni(2+): cysteine 68, cysteine 71, cysteine 374, and cysteine 377.

It belongs to the complex I 49 kDa subunit family. As to quaternary structure, the membrane-bound hydrogenase complex is composed of MbhK and MbhL, and may also contain MbhJ. It depends on Ni(2+) as a cofactor.

It localises to the cell membrane. It carries out the reaction H2 + 2 oxidized [2Fe-2S]-[ferredoxin] = 2 reduced [2Fe-2S]-[ferredoxin] + 2 H(+). Inhibited by 0.1 mM Cu(2+). In terms of biological role, alpha subunit of a hydrogen-evolving hydrogenase that utilizes protons both as a substrate for hydrogen production and proton translocation. Acts by coupling the redox reaction via ferredoxin and iron-sulfur (Fe-S) clusters to proton translocation across the membrane thereby conserving the redox energy in a proton gradient. In Pyrococcus furiosus (strain ATCC 43587 / DSM 3638 / JCM 8422 / Vc1), this protein is Membrane-bound hydrogenase subunit alpha.